The following is a 256-amino-acid chain: Thiazole synthase (256 aa).

K95 serves as the catalytic Schiff-base intermediate with DXP. 1-deoxy-D-xylulose 5-phosphate contacts are provided by residues G156, 182–183 (AG), and 204–205 (NT).

It belongs to the ThiG family. In terms of assembly, homotetramer. Forms heterodimers with either ThiH or ThiS.

It is found in the cytoplasm. It catalyses the reaction [ThiS sulfur-carrier protein]-C-terminal-Gly-aminoethanethioate + 2-iminoacetate + 1-deoxy-D-xylulose 5-phosphate = [ThiS sulfur-carrier protein]-C-terminal Gly-Gly + 2-[(2R,5Z)-2-carboxy-4-methylthiazol-5(2H)-ylidene]ethyl phosphate + 2 H2O + H(+). The protein operates within cofactor biosynthesis; thiamine diphosphate biosynthesis. Functionally, catalyzes the rearrangement of 1-deoxy-D-xylulose 5-phosphate (DXP) to produce the thiazole phosphate moiety of thiamine. Sulfur is provided by the thiocarboxylate moiety of the carrier protein ThiS. In vitro, sulfur can be provided by H(2)S. This chain is Thiazole synthase, found in Vibrio cholerae serotype O1 (strain ATCC 39541 / Classical Ogawa 395 / O395).